We begin with the raw amino-acid sequence, 327 residues long: Ribosomal RNA small subunit methyltransferase H (327 aa).

Residues 36-38 (GGH), Asp-61, Phe-88, Asp-114, and Gln-121 contribute to the S-adenosyl-L-methionine site.

This sequence belongs to the methyltransferase superfamily. RsmH family.

It localises to the cytoplasm. The enzyme catalyses cytidine(1402) in 16S rRNA + S-adenosyl-L-methionine = N(4)-methylcytidine(1402) in 16S rRNA + S-adenosyl-L-homocysteine + H(+). Functionally, specifically methylates the N4 position of cytidine in position 1402 (C1402) of 16S rRNA. The chain is Ribosomal RNA small subunit methyltransferase H from Chlorobium phaeovibrioides (strain DSM 265 / 1930) (Prosthecochloris vibrioformis (strain DSM 265)).